A 423-amino-acid chain; its full sequence is Gamma-glutamyl phosphate reductase (423 aa).

The protein belongs to the gamma-glutamyl phosphate reductase family.

The protein resides in the cytoplasm. It carries out the reaction L-glutamate 5-semialdehyde + phosphate + NADP(+) = L-glutamyl 5-phosphate + NADPH + H(+). Its pathway is amino-acid biosynthesis; L-proline biosynthesis; L-glutamate 5-semialdehyde from L-glutamate: step 2/2. In terms of biological role, catalyzes the NADPH-dependent reduction of L-glutamate 5-phosphate into L-glutamate 5-semialdehyde and phosphate. The product spontaneously undergoes cyclization to form 1-pyrroline-5-carboxylate. In Desulfovibrio desulfuricans (strain ATCC 27774 / DSM 6949 / MB), this protein is Gamma-glutamyl phosphate reductase.